Reading from the N-terminus, the 267-residue chain is tRNA pseudouridine synthase A (267 aa).

Asp51 (nucleophile) is an active-site residue. Residue Tyr109 coordinates substrate.

Belongs to the tRNA pseudouridine synthase TruA family. Homodimer.

The enzyme catalyses uridine(38/39/40) in tRNA = pseudouridine(38/39/40) in tRNA. In terms of biological role, formation of pseudouridine at positions 38, 39 and 40 in the anticodon stem and loop of transfer RNAs. The polypeptide is tRNA pseudouridine synthase A (Staphylococcus aureus (strain Mu3 / ATCC 700698)).